A 96-amino-acid chain; its full sequence is Non-specific lipid-transfer protein 2 (96 aa).

Positions 1–27 (MMRRLAVLVLAVAMVAACGGGVVGVAG) are cleaved as a signal peptide. 4 cysteine pairs are disulfide-bonded: Cys30/Cys62, Cys38/Cys52, Cys53/Cys88, and Cys64/Cys95.

Belongs to the plant LTP family. B11E subfamily.

Transfer lipids across membranes. May play a role in plant defense or in the biosynthesis of cuticle layers. The chain is Non-specific lipid-transfer protein 2 (LTP-2) from Oryza sativa subsp. indica (Rice).